The sequence spans 435 residues: Protein CHLOROPLAST IMPORT APPARATUS 2 (435 aa).

Residues 1-59 (MSACLSSGGGGAAAYSFELEKVKSPPPSSSTTTTRATSPSSTISESSNSPLAISTRKPR) constitute a chloroplast transit peptide. 2 disordered regions span residues 21–66 (KVKS…KRPN) and 412–435 (ADQR…SGQR). Residues 29-49 (SSTTTTRATSPSSTISESSNS) are compositionally biased toward low complexity. Residues 56–65 (RKPRTQRKRP) are compositionally biased toward basic residues. One can recognise a CCT domain in the interval 383 to 425 (REASVLRYKEKRRTRLFSKKIRYQVRKLNADQRPRMKGRFVRR).

As to expression, expressed in leaves and young flower buds.

The protein localises to the plastid. Its subcellular location is the chloroplast. It localises to the nucleus. Responsible for specific up-regulation of the translocon genes TOC33 and TOC75 in leaves. Involved in the general chloroplast protein import pathway regulation, including protein import and protein translation efficiencies. The chain is Protein CHLOROPLAST IMPORT APPARATUS 2 (CIA2) from Arabidopsis thaliana (Mouse-ear cress).